The following is a 768-amino-acid chain: P-selectin (768 aa).

A signal peptide spans methionine 1 to alanine 41. At tryptophan 42–alanine 709 the chain is on the extracellular side. Residues valine 58 to cysteine 158 enclose the C-type lectin domain. Cystine bridges form between cysteine 60/cysteine 158, cysteine 131/cysteine 150, cysteine 163/cysteine 174, cysteine 168/cysteine 183, cysteine 185/cysteine 194, cysteine 200/cysteine 244, cysteine 230/cysteine 257, cysteine 262/cysteine 306, cysteine 292/cysteine 319, cysteine 324/cysteine 368, cysteine 354/cysteine 381, cysteine 386/cysteine 430, cysteine 416/cysteine 443, cysteine 448/cysteine 492, cysteine 478/cysteine 505, cysteine 510/cysteine 554, cysteine 540/cysteine 567, cysteine 580/cysteine 624, cysteine 610/cysteine 637, cysteine 642/cysteine 686, and cysteine 672/cysteine 699. Residues glutamate 121, asparagine 123, and asparagine 124 each contribute to the Ca(2+) site. Asparagine 123 contacts a carbohydrate. Positions 133 and 146 each coordinate a carbohydrate. Asparagine 146 and aspartate 147 together coordinate Ca(2+). Residues tyrosine 159–glutamate 195 enclose the EGF-like domain. 8 Sushi domains span residues lysine 198–alanine 259, valine 260–alanine 321, isoleucine 322–alanine 383, leucine 384–alanine 445, valine 446–alanine 507, isoleucine 508–glycine 569, valine 578–alanine 639, and valine 640–alanine 701. A glycan (N-linked (GlcNAc...) asparagine) is linked at asparagine 398. A glycan (N-linked (GlcNAc...) asparagine) is linked at asparagine 603. Asparagine 654, asparagine 661, and asparagine 679 each carry an N-linked (GlcNAc...) asparagine glycan. A helical membrane pass occupies residues leucine 710–leucine 733. Residues arginine 734–proline 768 are Cytoplasmic-facing. Residue cysteine 745 is the site of S-palmitoyl cysteine; alternate attachment. A lipid anchor (S-stearoyl cysteine; alternate) is attached at cysteine 745. Residues tyrosine 756 to phenylalanine 759 carry the Endocytosis signal motif. The tract at residues phenylalanine 759 to proline 768 is interaction with SNX17.

This sequence belongs to the selectin/LECAM family. Interacts with SNX17. Interacts with SELPLG/PSGL1 and PODXL2 and mediates neutrophil adhesion and leukocyte rolling. This interaction requires the sialyl-Lewis X epitope of SELPLG and PODXL2, and specific tyrosine sulfation on SELPLG. Interacts (via C-type lectin domain) with alpha-IIb/beta3 integrin ITGA2B:ITGB3 and alpha-V/beta-3 integrin ITGAV:ITGB3. Interacts with alpha5/beta1 integrin ITGA5:ITGB1 and alpha4/beta1 integrin ITGA4:ITGB. Stored in the alpha-granules of platelets and Weibel-Palade bodies of endothelial cells. Upon cell activation by agonists, P-selectin is transported rapidly to the cell surface.

It localises to the cell membrane. Functionally, ca(2+)-dependent receptor for myeloid cells that binds to carbohydrates on neutrophils and monocytes. Mediates the interaction of activated endothelial cells or platelets with leukocytes. The ligand recognized is sialyl-Lewis X. Mediates rapid rolling of leukocyte rolling over vascular surfaces during the initial steps in inflammation through interaction with SELPLG. Mediates cell-cell interactions and cell adhesion via the interaction with integrin alpha-IIb/beta3 (ITGA2B:ITGB3) and integrin alpha-V/beta-3 (ITGAV:ITGB3). The sequence is that of P-selectin (Selp) from Mus musculus (Mouse).